Consider the following 1034-residue polypeptide: Integrin alpha-V (1034 aa).

Positions 1–19 are cleaved as a signal peptide; that stretch reads MAALRASLLLSCALTAARA. Over 20–978 the chain is Extracellular; it reads FNLDAERPAV…WGIQPQPMPV (959 aa). FG-GAP repeat units lie at residues 21–86, 97–158, 161–213, 225–279, 280–345, 346–403, and 407–470; these read NLDA…RNCQ, DFAP…VEYA, RSTT…LAKY, QLAT…GKNM, SSMY…GGFQ, IAKL…GLNA, and RILE…VNPT. The N-linked (GlcNAc...) asparagine glycan is linked to Asn62. 3 cysteine pairs are disulfide-bonded: Cys77–Cys85, Cys126–Cys146, and Cys160–Cys173. Positions 248, 252, 254, and 256 each coordinate Ca(2+). N-linked (GlcNAc...) asparagine glycosylation is found at Asn278 and Asn284. Residues Asp302, Asn304, Asp306, Tyr308, Asp310, Asp367, Asp369, Asp371, Phe373, Asp375, Asp431, Asp433, Asn435, Tyr437, and Asp439 each contribute to the Ca(2+) site. 2 cysteine pairs are disulfide-bonded: Cys479–Cys488 and Cys494–Cys551. Asn540 and Asn601 each carry an N-linked (GlcNAc...) asparagine glycan. Disulfide bonds link Cys612-Cys618 and Cys684-Cys697. N-linked (GlcNAc...) asparagine glycosylation is found at Asn690, Asn821, Asn837, and Asn860. 2 cysteine pairs are disulfide-bonded: Cys838–Cys900 and Cys890–Cys895. N-linked (GlcNAc...) asparagine glycans are attached at residues Asn931, Asn951, Asn959, and Asn966. A helical transmembrane segment spans residues 979–1002; the sequence is PVWVIILAVLAGLLLLAVLVLVMY. Topologically, residues 1003 to 1034 are cytoplasmic; the sequence is RMGFFKRVRPPQEEQEREQLQPHENGEGTSEA. Residues 1005–1009 carry the GFFKR motif motif; sequence GFFKR. Residues 1013 to 1028 are compositionally biased toward basic and acidic residues; sequence PQEEQEREQLQPHENG. The disordered stretch occupies residues 1013 to 1034; it reads PQEEQEREQLQPHENGEGTSEA.

It belongs to the integrin alpha chain family. In terms of assembly, heterodimer of an alpha and a beta subunit. The alpha subunit is composed of a heavy and a light chain linked by a disulfide bond. Alpha-V (ITGAV) associates with either beta-1 (ITGB1), beta-3 (ITGB3), beta-5 (ITGB5), beta-6 (ITGB6) or beta-8 (ITGB8). Interacts with RAB25. Interacts with CIB1. Integrins ITGAV:ITGB3 and ITGAV:ITGB5 interact with FBLN5 (via N-terminus). ITGAV:ITGB3 and ITGAV:ITGB5 interact with CCN3. ITGAV:ITGB3 interacts with ADGRA2. ITGAV:ITGB3 interacts with FGF2; it is likely that FGF2 can simultaneously bind ITGAV:ITGB3 and FGF receptors. ITGAV:ITGB3 is found in a ternary complex with CX3CR1 and CX3CL1. ITGAV:ITGB3 is found in a ternary complex with NRG1 and ERBB3. ITGAV:ITGB3 is found in a ternary complex with FGF1 and FGFR1. ITGAV:ITGB3 is found in a ternary complex with IGF1 and IGF1R. ITGAV:ITGB3 interacts with IGF2. ITGAV:ITGB3 and ITGAV:ITGB6 interact with FBN1. ITGAV:ITGB3 interacts with CD9, CD81 and CD151 (via second extracellular domain). ITGAV:ITGB6 interacts with TGFB1.

Its subcellular location is the membrane. It localises to the cell junction. It is found in the focal adhesion. In terms of biological role, the alpha-V (ITGAV) integrins are receptors for vitronectin, cytotactin, fibronectin, fibrinogen, laminin, matrix metalloproteinase-2, osteopontin, osteomodulin, prothrombin, thrombospondin, TGFB1 and vWF. They recognize the sequence R-G-D in a wide array of ligands. Alpha-V integrins may play a role in embryo implantation, angiogenesis and wound healing. ITGAV:ITGB3 binds to fractalkine (CX3CL1) and may act as its coreceptor in CX3CR1-dependent fractalkine signaling. ITGAV:ITGB3 binds to NRG1 (via EGF domain) and this binding is essential for NRG1-ERBB signaling. ITGAV:ITGB3 binds to FGF1 and this binding is essential for FGF1 signaling. ITGAV:ITGB3 binds to FGF2 and this binding is essential for FGF2 signaling. ITGAV:ITGB3 binds to IGF1 and this binding is essential for IGF1 signaling. ITGAV:ITGB3 binds to IGF2 and this binding is essential for IGF2 signaling. ITGAV:ITGB3 binds to IL1B and this binding is essential for IL1B signaling. ITGAV:ITGB3 binds to PLA2G2A via a site (site 2) which is distinct from the classical ligand-binding site (site 1) and this induces integrin conformational changes and enhanced ligand binding to site 1. ITGAV:ITGB3 and ITGAV:ITGB6 act as receptors for fibrillin-1 (FBN1) and mediate R-G-D-dependent cell adhesion to FBN1. Integrin alpha-V/beta-6 or alpha-V/beta-8 (ITGAV:ITGB6 or ITGAV:ITGB8) mediates R-G-D-dependent release of transforming growth factor beta-1 (TGF-beta-1) from regulatory Latency-associated peptide (LAP), thereby playing a key role in TGF-beta-1 activation. ITGAV:ITGB3 acts as a receptor for CD40LG. ITGAV:ITGB3 acts as a receptor for IBSP and promotes cell adhesion and migration to IBSP. The protein is Integrin alpha-V (ITGAV) of Gallus gallus (Chicken).